We begin with the raw amino-acid sequence, 337 residues long: Leucine-rich repeat-containing protein 39 (337 aa).

LRR repeat units lie at residues 84–105, 107–128, 130–152, 153–176, 177–198, 200–221, 223–244, 246–267, and 269–290; these read QLQEWQLHRTGLLKIPEFIGRF, HLIVLDLSRNTISEIPRGIGLL, RLQELILSYNKIKTVPKELSNCT, SLEKLELAVNRDISDLPPELSKLL, KLTHLDLSMNQFTTIPHAVLDM, ALEWLDMGSNSLQQLPDSLDRM, SLHTLWLQRNEITCLPETIKNM, NLGTLVLSNNKLQDIPGCMEEM, and NLRFVNFRDNPLRLEVTLPPSD.

Interacts with MYH7 (via C-terminus). Expressed in heart and skeletal muscle.

The protein resides in the cytoplasm. Its subcellular location is the myofibril. The protein localises to the sarcomere. It is found in the m line. Functionally, component of the sarcomeric M-band which plays a role in myocyte response to biomechanical stress. May regulate expression of other M-band proteins via an SRF-dependent pathway. Important for normal contractile function in heart. The sequence is that of Leucine-rich repeat-containing protein 39 from Mus musculus (Mouse).